Here is a 269-residue protein sequence, read N- to C-terminus: Monofunctional glycosyltransferase (269 aa).

Residues alanine 46 to serine 66 form a helical membrane-spanning segment.

It belongs to the glycosyltransferase 51 family.

It localises to the cell membrane. It carries out the reaction [GlcNAc-(1-&gt;4)-Mur2Ac(oyl-L-Ala-gamma-D-Glu-L-Lys-D-Ala-D-Ala)](n)-di-trans,octa-cis-undecaprenyl diphosphate + beta-D-GlcNAc-(1-&gt;4)-Mur2Ac(oyl-L-Ala-gamma-D-Glu-L-Lys-D-Ala-D-Ala)-di-trans,octa-cis-undecaprenyl diphosphate = [GlcNAc-(1-&gt;4)-Mur2Ac(oyl-L-Ala-gamma-D-Glu-L-Lys-D-Ala-D-Ala)](n+1)-di-trans,octa-cis-undecaprenyl diphosphate + di-trans,octa-cis-undecaprenyl diphosphate + H(+). Its pathway is cell wall biogenesis; peptidoglycan biosynthesis. Peptidoglycan polymerase that catalyzes glycan chain elongation using lipid-linked disaccharide-pentapeptide as the substrate. In Staphylococcus epidermidis (strain ATCC 35984 / DSM 28319 / BCRC 17069 / CCUG 31568 / BM 3577 / RP62A), this protein is Monofunctional glycosyltransferase.